The following is a 320-amino-acid chain: NAC domain-containing protein 20 (320 aa).

Residues 14-170 enclose the NAC domain; it reads LPPGFRFHPT…DWAVCRIFHK (157 aa). A DNA-binding region spans residues 114–176; the sequence is IGMKKTLVFY…IFHKSSGIKK (63 aa).

As to quaternary structure, forms homodimers. Forms heterodimers with NAC26. In terms of tissue distribution, expressed in developing seeds.

Its subcellular location is the nucleus. It localises to the endoplasmic reticulum. Functionally, transcription factor that acts redundantly with NAC26 to regulate the expression of genes involved in the biosynthesis of starch and storage proteins in grain. Directly binds to the promoters of starch synthase 1 (SS1), pullulanase (PUL), glutelin A1 (GLUA1), glutelins B4 and B5 (GLUB4 and GLUB5), alpha-globulin and 16 kDa prolamin, and activates their expression. Possesses transactivation activity in yeast. The polypeptide is NAC domain-containing protein 20 (Oryza sativa subsp. indica (Rice)).